A 481-amino-acid chain; its full sequence is Phototropic-responsive NPH3 family protein NPY4 (481 aa).

One can recognise a BTB domain in the interval 29–102 (TEIIIIIGNV…CYGITVTLNA (74 aa)). The NPH3 domain maps to 207 to 450 (DWWVEDLCEL…VQVLFFEQIR (244 aa)). Tyr-391 bears the Phosphotyrosine mark. The disordered stretch occupies residues 456–481 (TGYSTPELTTTTLNTEDDEWDHEKEF). Positions 460–469 (TPELTTTTLN) are enriched in low complexity.

Belongs to the NPH3 family. In terms of tissue distribution, expressed in the hypocotyl cells that would differentiate into vascular bundles. Highly expressed in primary root tips and radicles.

It localises to the cell membrane. The protein localises to the cytoplasm. It is found in the cytosol. It participates in protein modification; protein ubiquitination. In terms of biological role, may act as a substrate-specific adapter of an E3 ubiquitin-protein ligase complex (CUL3-RBX1-BTB) which mediates the ubiquitination and subsequent proteasomal degradation of target proteins. Plays an essential role in auxin-mediated organogenesis and in root gravitropic responses through the control of PIN proteins (e.g. PIN1 and PIN2) polarity in the root tip endodermal cell layer and in shoot epidermis. Recruited to the plasma membrane by PINs (e.g. PIN1 and PIN2) and, in concert with AGC kinases-mediated (e.g. D6PK and PID) PINs phosphorylation, maintains their polarity through limiting lateral diffusion-based escape. The sequence is that of Phototropic-responsive NPH3 family protein NPY4 from Arabidopsis thaliana (Mouse-ear cress).